The primary structure comprises 846 residues: Inactive cap-specific mRNA (nucleoside-2'-O-)-methyltransferase 1B (846 aa).

The tract at residues 30 to 50 (DDEDDFVDDPSPTEQKTKAEK) is disordered. The 47-residue stretch at 44–90 (QKTKAEKKMERMGYKAGEGLGKNKQGIQEPIAISFREGKAGLGHEQW) folds into the G-patch domain. Positions 184–413 (FFLNRSAMKT…ERFVVCKGLR (230 aa)) constitute a RrmJ-type SAM-dependent 2'-O-MTase domain.

The polypeptide is Inactive cap-specific mRNA (nucleoside-2'-O-)-methyltransferase 1B (Caenorhabditis briggsae).